We begin with the raw amino-acid sequence, 377 residues long: Queuine tRNA-ribosyltransferase (377 aa).

The active-site Proton acceptor is D89. Substrate-binding positions include 89 to 93 (DSGGF), D143, Q187, and G214. The tract at residues 245–251 (GVGKPED) is RNA binding. The active-site Nucleophile is D264. An RNA binding; important for wobble base 34 recognition region spans residues 269–273 (TRNAR). Zn(2+) contacts are provided by C302, C304, C307, and H333.

It belongs to the queuine tRNA-ribosyltransferase family. As to quaternary structure, homodimer. Within each dimer, one monomer is responsible for RNA recognition and catalysis, while the other monomer binds to the replacement base PreQ1. Requires Zn(2+) as cofactor.

The enzyme catalyses 7-aminomethyl-7-carbaguanine + guanosine(34) in tRNA = 7-aminomethyl-7-carbaguanosine(34) in tRNA + guanine. It participates in tRNA modification; tRNA-queuosine biosynthesis. Catalyzes the base-exchange of a guanine (G) residue with the queuine precursor 7-aminomethyl-7-deazaguanine (PreQ1) at position 34 (anticodon wobble position) in tRNAs with GU(N) anticodons (tRNA-Asp, -Asn, -His and -Tyr). Catalysis occurs through a double-displacement mechanism. The nucleophile active site attacks the C1' of nucleotide 34 to detach the guanine base from the RNA, forming a covalent enzyme-RNA intermediate. The proton acceptor active site deprotonates the incoming PreQ1, allowing a nucleophilic attack on the C1' of the ribose to form the product. After dissociation, two additional enzymatic reactions on the tRNA convert PreQ1 to queuine (Q), resulting in the hypermodified nucleoside queuosine (7-(((4,5-cis-dihydroxy-2-cyclopenten-1-yl)amino)methyl)-7-deazaguanosine). The chain is Queuine tRNA-ribosyltransferase from Shewanella halifaxensis (strain HAW-EB4).